Here is a 302-residue protein sequence, read N- to C-terminus: Recombination-associated protein RdgC (302 aa).

The protein belongs to the RdgC family.

The protein resides in the cytoplasm. It localises to the nucleoid. Its function is as follows. May be involved in recombination. In Actinobacillus succinogenes (strain ATCC 55618 / DSM 22257 / CCUG 43843 / 130Z), this protein is Recombination-associated protein RdgC.